We begin with the raw amino-acid sequence, 356 residues long: DNA-directed RNA polymerase subunit alpha (356 aa).

An alpha N-terminal domain (alpha-NTD) region spans residues 1–259 (MIKAAATLKS…KLMTACLTTL (259 aa)). Residues 277-356 (FVQVNYNKME…STYGIELKED (80 aa)) form an alpha C-terminal domain (alpha-CTD) region.

It belongs to the RNA polymerase alpha chain family. As to quaternary structure, in plastids the minimal PEP RNA polymerase catalytic core is composed of four subunits: alpha, beta, beta', and beta''. When a (nuclear-encoded) sigma factor is associated with the core the holoenzyme is formed, which can initiate transcription.

Its subcellular location is the plastid. The protein resides in the chloroplast. The enzyme catalyses RNA(n) + a ribonucleoside 5'-triphosphate = RNA(n+1) + diphosphate. Functionally, DNA-dependent RNA polymerase catalyzes the transcription of DNA into RNA using the four ribonucleoside triphosphates as substrates. This Ostreococcus tauri protein is DNA-directed RNA polymerase subunit alpha.